The primary structure comprises 446 residues: tRNA-2-methylthio-N(6)-dimethylallyladenosine synthase (446 aa).

An MTTase N-terminal domain is found at 2-122; sequence KKAYVKSYGC…LPDLLRQSRE (121 aa). [4Fe-4S] cluster contacts are provided by C11, C47, C85, C157, C161, and C164. Residues 143–375 form the Radical SAM core domain; it reads RNRGVTGFLT…QDLLDRQRHA (233 aa). In terms of domain architecture, TRAM spans 378 to 440; it reads AASVGTLTEI…SNSLFGEALE (63 aa).

The protein belongs to the methylthiotransferase family. MiaB subfamily. Monomer. Requires [4Fe-4S] cluster as cofactor.

The protein localises to the cytoplasm. It catalyses the reaction N(6)-dimethylallyladenosine(37) in tRNA + (sulfur carrier)-SH + AH2 + 2 S-adenosyl-L-methionine = 2-methylsulfanyl-N(6)-dimethylallyladenosine(37) in tRNA + (sulfur carrier)-H + 5'-deoxyadenosine + L-methionine + A + S-adenosyl-L-homocysteine + 2 H(+). Catalyzes the methylthiolation of N6-(dimethylallyl)adenosine (i(6)A), leading to the formation of 2-methylthio-N6-(dimethylallyl)adenosine (ms(2)i(6)A) at position 37 in tRNAs that read codons beginning with uridine. The protein is tRNA-2-methylthio-N(6)-dimethylallyladenosine synthase of Methylorubrum extorquens (strain CM4 / NCIMB 13688) (Methylobacterium extorquens).